The primary structure comprises 341 residues: GDT1-like protein 1, chloroplastic (341 aa).

The segment covering 1–13 has biased composition (low complexity); the sequence is MASVASSTVFASS. Disordered stretches follow at residues 1–41 and 54–76; these read MASV…GRSV and VVTR…GGGR. The transit peptide at 1–57 directs the protein to the chloroplast; the sequence is MASVASSTVFASSLPHHRATTRAPPTPPRIPRRARLPGRSVVSCLPKRGSEKLVVTR. The next 7 membrane-spanning stretches (helical) occupy residues 79 to 99, 117 to 137, 158 to 178, 203 to 223, 246 to 266, 286 to 306, and 318 to 338; these read PSLD…VLML, VVGD…LIFF, AIIF…SVVL, FLAA…AASG, GAGI…VFIA, LGVI…AVLG, and IVAY…LVEI.

Belongs to the GDT1 family.

Its subcellular location is the plastid. The protein localises to the chloroplast membrane. The chain is GDT1-like protein 1, chloroplastic from Oryza sativa subsp. japonica (Rice).